Reading from the N-terminus, the 163-residue chain is Endoribonuclease YbeY (163 aa).

3 residues coordinate Zn(2+): H121, H125, and H131.

This sequence belongs to the endoribonuclease YbeY family. The cofactor is Zn(2+).

The protein resides in the cytoplasm. Functionally, single strand-specific metallo-endoribonuclease involved in late-stage 70S ribosome quality control and in maturation of the 3' terminus of the 16S rRNA. This chain is Endoribonuclease YbeY, found in Synechococcus sp. (strain JA-3-3Ab) (Cyanobacteria bacterium Yellowstone A-Prime).